Reading from the N-terminus, the 467-residue chain is Chromosomal replication initiator protein DnaA (467 aa).

Residues 1-79 (MTELDQFWPA…GELPVELRLG (79 aa)) are domain I, interacts with DnaA modulators. The domain II stretch occupies residues 79–129 (GAPTARPAAPVAGNSQPKAKEPAKAAASAPAAPSPAKQAAVKAIGGSHEST). The tract at residues 84-126 (RPAAPVAGNSQPKAKEPAKAAASAPAAPSPAKQAAVKAIGGSH) is disordered. Residues 102-121 (KAAASAPAAPSPAKQAAVKA) are compositionally biased toward low complexity. The segment at 130 to 347 (RLNPSFTFDT…GALKRVVAYA (218 aa)) is domain III, AAA+ region. Residues G175, G177, K178, and T179 each coordinate ATP. Positions 348–467 (RFTSQNITLE…YEALLSMLRN (120 aa)) are domain IV, binds dsDNA.

The protein belongs to the DnaA family. In terms of assembly, oligomerizes as a right-handed, spiral filament on DNA at oriC.

The protein localises to the cytoplasm. In terms of biological role, plays an essential role in the initiation and regulation of chromosomal replication. ATP-DnaA binds to the origin of replication (oriC) to initiate formation of the DNA replication initiation complex once per cell cycle. Binds the DnaA box (a 9 base pair repeat at the origin) and separates the double-stranded (ds)DNA. Forms a right-handed helical filament on oriC DNA; dsDNA binds to the exterior of the filament while single-stranded (ss)DNA is stabiized in the filament's interior. The ATP-DnaA-oriC complex binds and stabilizes one strand of the AT-rich DNA unwinding element (DUE), permitting loading of DNA polymerase. After initiation quickly degrades to an ADP-DnaA complex that is not apt for DNA replication. Binds acidic phospholipids. This is Chromosomal replication initiator protein DnaA from Chromobacterium violaceum (strain ATCC 12472 / DSM 30191 / JCM 1249 / CCUG 213 / NBRC 12614 / NCIMB 9131 / NCTC 9757 / MK).